A 320-amino-acid chain; its full sequence is Mitochondrial oxaloacetate transport protein (320 aa).

3 Solcar repeats span residues 21–114 (LGPV…IRRT), 126–218 (NKLA…AKRM), and 227–313 (EGMI…TNKL). The next 6 helical transmembrane spans lie at 26–47 (GFLS…FEVI), 91–111 (GTAY…YEPI), 129–145 (AINV…GALF), 197–217 (AILR…WAKR), 233–253 (LTAS…FDTV), and 285–306 (LYKG…CLTF).

It belongs to the mitochondrial carrier (TC 2.A.29) family.

The protein resides in the mitochondrion inner membrane. It carries out the reaction a dicarboxylate(in) + sulfate(out) = a dicarboxylate(out) + sulfate(in). The catalysed reaction is (2S)-2-isopropylmalate(in) + sulfate(out) = (2S)-2-isopropylmalate(out) + sulfate(in). The enzyme catalyses (2R,3S)-3-isopropylmalate(in) + sulfate(out) = (2R,3S)-3-isopropylmalate(out) + sulfate(in). It catalyses the reaction malonate(in) + sulfate(out) = malonate(out) + sulfate(in). It carries out the reaction oxaloacetate(in) + sulfate(out) = oxaloacetate(out) + sulfate(in). The catalysed reaction is thiosulfate(in) + sulfate(out) = thiosulfate(out) + sulfate(in). In terms of biological role, antiporter that exchanges dicarboxylates and sulfur oxoanions across the inner membrane of mitochondria. Exports alpha-isopropylmalate from mitochondrial matrix to the cytosol, where it serves as a precursor for leucine biosynthesis. The chain is Mitochondrial oxaloacetate transport protein (oac1) from Schizosaccharomyces pombe (strain 972 / ATCC 24843) (Fission yeast).